The chain runs to 538 residues: Syncytin-2 (538 aa).

Positions Met1–Ala15 are cleaved as a signal peptide. Residues Ala16–Lys478 lie on the Extracellular side of the membrane. The CXXC motif lies at Cys43–Cys46. 3 cysteine pairs are disulfide-bonded: Cys43–Cys46, Cys43–Cys439, and Cys431–Cys438. 7 N-linked (GlcNAc...) asparagine glycosylation sites follow: Asn146, Asn177, Asn220, Asn241, Asn247, Asn312, and Asn332. The tract at residues Leu354–Ile374 is fusion peptide. Residues Leu414–Ile430 carry the CKS-17 motif. Positions Cys431 to Cys439 match the CX6CC motif. Residue Asn443 is glycosylated (N-linked (GlcNAc...) asparagine). The chain crosses the membrane as a helical span at residues Trp479–Phe499. The Cytoplasmic segment spans residues Gly500–Phe538.

This sequence belongs to the gamma type-C retroviral envelope protein family. HERV class-I FRD env subfamily. As to quaternary structure, the surface and transmembrane proteins form a heterodimer. They are attached by non-covalent interactions or by a labile interchain disulfide bond. Specific enzymatic cleavages in vivo yield the mature SU and TM proteins. In terms of processing, the CXXC motif is highly conserved across a broad range of retroviral envelope proteins. It is thought to participate in the formation of a labile disulfide bond possibly with the CX6CC motif present in the transmembrane protein.

The protein localises to the virion. Its subcellular location is the cell membrane. Functionally, this endogenous retroviral envelope protein has retained its original fusogenic properties and participates in trophoblast fusion and the formation of a syncytium during placenta morphogenesis. The interaction with MFSD2A is apparently important for this process. Its function is as follows. Endogenous envelope proteins may have kept, lost or modified their original function during evolution but this one can still make pseudotypes with MLV, HIV-1 or SIV-1 virions and confer infectivity. Retroviral envelope proteins mediate receptor recognition and membrane fusion during early infection. The surface protein mediates receptor recognition, while the transmembrane protein anchors the envelope heterodimer to the viral membrane through one transmembrane domain. The other hydrophobic domain, called fusion peptide, mediates fusion of the viral membrane with the target cell membrane. This Callithrix jacchus (White-tufted-ear marmoset) protein is Syncytin-2 (ERVFRD-1).